Consider the following 348-residue polypeptide: uncharacterized protein (348 aa).

A signal peptide spans 1–26 (MKKRIILLLAVIIAAAAAGVAFYVAK).

This is an uncharacterized protein from Bacillus subtilis (strain 168).